The primary structure comprises 757 residues: Tyrosine-protein kinase HTK16 (757 aa).

The SH2 1 domain occupies 10–102; sequence WYHGKITREV…GLPCKLVDFC (93 aa). ANK repeat units follow at residues 115–147, 151–180, 184–214, 219–248, and 252–281; these read GLDT…NVNA, SGLT…DASA, NGRT…DFLK, NGWV…SMYP, and DGDT…NQPK. Residues 287–379 form the SH2 2 domain; that stretch reads WLHQNLDRNG…GLPTLLQFPV (93 aa). Disordered regions lie at residues 381-407 and 444-467; these read SAEN…PSRP and PKLP…QKGD. Polar residues predominate over residues 455–467; it reads EVPNSVNVGQKGD. The Protein kinase domain occupies 484 to 740; it reads ISFGKELGVG…PTFNELHSTF (257 aa). ATP is bound by residues 490–498 and Lys516; that span reads LGVGEFGSV. Asp608 (proton acceptor) is an active-site residue. A Phosphotyrosine modification is found at Tyr746.

This sequence belongs to the protein kinase superfamily. Tyr protein kinase family. As to expression, epithelial cells.

It catalyses the reaction L-tyrosyl-[protein] + ATP = O-phospho-L-tyrosyl-[protein] + ADP + H(+). Its function is as follows. May be involved in signal transduction. The polypeptide is Tyrosine-protein kinase HTK16 (HTK16) (Hydra vulgaris (Hydra)).